Consider the following 349-residue polypeptide: Glycine-rich cell wall structural protein (349 aa).

Positions 1–23 (MGKVSFGFLGLMLVVVVIGVVEC) are cleaved as a signal peptide.

The protein resides in the secreted. The protein localises to the cell wall. In terms of biological role, responsible for plasticity of the cell wall. The sequence is that of Glycine-rich cell wall structural protein from Arabidopsis thaliana (Mouse-ear cress).